Consider the following 186-residue polypeptide: Ribosome-recycling factor (186 aa).

It belongs to the RRF family.

The protein resides in the cytoplasm. In terms of biological role, responsible for the release of ribosomes from messenger RNA at the termination of protein biosynthesis. May increase the efficiency of translation by recycling ribosomes from one round of translation to another. The polypeptide is Ribosome-recycling factor (Chlorobium phaeovibrioides (strain DSM 265 / 1930) (Prosthecochloris vibrioformis (strain DSM 265))).